The chain runs to 1503 residues: EF-hand calcium-binding domain-containing protein 5 (1503 aa).

The tract at residues 1-23 (MNESASQEELRPAQENRKEDKER) is disordered. Over residues 8–23 (EELRPAQENRKEDKER) the composition is skewed to basic and acidic residues. Ser77 is modified (phosphoserine). Disordered stretches follow at residues 477–518 (ASKT…EQGP), 544–656 (IEPG…QGPY), and 730–750 (FPET…KSQK). Residues 549-561 (HTESTLEQGSSRR) show a composition bias toward polar residues. Basic and acidic residues-rich tracts occupy residues 562-582 (LLTE…HKGS) and 607-622 (GSRR…HKGS). Positions 869–904 (RQRLLLEAIFQKWDSDGSGFLDLKEVDELLYTYKEG) constitute an EF-hand domain. The Ca(2+) site is built by Asp882, Asp884, Ser886, and Glu893.

The protein is EF-hand calcium-binding domain-containing protein 5 (EFCAB5) of Homo sapiens (Human).